The sequence spans 117 residues: Mediator of RNA polymerase II transcription subunit 11 (117 aa).

Ala-2 bears the N-acetylalanine mark.

The protein belongs to the Mediator complex subunit 11 family. As to quaternary structure, component of the Mediator complex, which is composed of MED1, MED4, MED6, MED7, MED8, MED9, MED10, MED11, MED12, MED13, MED13L, MED14, MED15, MED16, MED17, MED18, MED19, MED20, MED21, MED22, MED23, MED24, MED25, MED26, MED27, MED29, MED30, MED31, CCNC, CDK8 and CDC2L6/CDK11. The MED12, MED13, CCNC and CDK8 subunits form a distinct module termed the CDK8 module. Mediator containing the CDK8 module is less active than Mediator lacking this module in supporting transcriptional activation. Individual preparations of the Mediator complex lacking one or more distinct subunits have been variously termed ARC, CRSP, DRIP, PC2, SMCC and TRAP. As to expression, expressed in cochlea.

It is found in the nucleus. Its function is as follows. Component of the Mediator complex, a coactivator involved in the regulated transcription of nearly all RNA polymerase II-dependent genes. Mediator functions as a bridge to convey information from gene-specific regulatory proteins to the basal RNA polymerase II transcription machinery. Mediator is recruited to promoters by direct interactions with regulatory proteins and serves as a scaffold for the assembly of a functional pre-initiation complex with RNA polymerase II and the general transcription factors. This is Mediator of RNA polymerase II transcription subunit 11 (Med11) from Mus musculus (Mouse).